The following is a 493-amino-acid chain: Ribose import ATP-binding protein RbsA (493 aa).

ABC transporter domains lie at 3-239 (IEMK…VGRE) and 246-493 (KRTP…TGGR). 35–42 (GENGAGKS) is an ATP binding site.

Belongs to the ABC transporter superfamily. Ribose importer (TC 3.A.1.2.1) family. The complex is composed of an ATP-binding protein (RbsA), two transmembrane proteins (RbsC) and a solute-binding protein (RbsB).

The protein localises to the cell membrane. It catalyses the reaction D-ribose(out) + ATP + H2O = D-ribose(in) + ADP + phosphate + H(+). Functionally, part of the ABC transporter complex RbsABC involved in ribose import. Responsible for energy coupling to the transport system. This chain is Ribose import ATP-binding protein RbsA, found in Bacillus subtilis (strain 168).